Consider the following 402-residue polypeptide: Acyl-[acyl-carrier-protein] desaturase 3, chloroplastic (402 aa).

2 disordered regions span residues 1 to 25 (MSLTGCLPPRPPCSMRRRTSGGGAS) and 38 to 66 (VGGIGNPTPRGKKPFAPWREVPPQVTHTL). Residues 1–32 (MSLTGCLPPRPPCSMRRRTSGGGASVSPVVVM) constitute a chloroplast transit peptide. Positions 139, 178, 181, 231, 264, and 267 each coordinate Fe cation.

This sequence belongs to the fatty acid desaturase type 2 family. As to quaternary structure, homodimer. Fe(2+) is required as a cofactor.

The protein resides in the plastid. It is found in the chloroplast. Its pathway is lipid metabolism; fatty acid metabolism. In terms of biological role, introduces a cis double bond in the acyl chain of an acyl-[acyl-carrier protein]. The polypeptide is Acyl-[acyl-carrier-protein] desaturase 3, chloroplastic (Oryza sativa subsp. indica (Rice)).